The sequence spans 262 residues: Acyl-[acyl-carrier-protein]--UDP-N-acetylglucosamine O-acyltransferase (262 aa).

The protein belongs to the transferase hexapeptide repeat family. LpxA subfamily. As to quaternary structure, homotrimer.

The protein localises to the cytoplasm. It catalyses the reaction a (3R)-hydroxyacyl-[ACP] + UDP-N-acetyl-alpha-D-glucosamine = a UDP-3-O-[(3R)-3-hydroxyacyl]-N-acetyl-alpha-D-glucosamine + holo-[ACP]. The protein operates within glycolipid biosynthesis; lipid IV(A) biosynthesis; lipid IV(A) from (3R)-3-hydroxytetradecanoyl-[acyl-carrier-protein] and UDP-N-acetyl-alpha-D-glucosamine: step 1/6. Functionally, involved in the biosynthesis of lipid A, a phosphorylated glycolipid that anchors the lipopolysaccharide to the outer membrane of the cell. The polypeptide is Acyl-[acyl-carrier-protein]--UDP-N-acetylglucosamine O-acyltransferase (Salmonella heidelberg (strain SL476)).